A 479-amino-acid chain; its full sequence is ATP-dependent protease ATPase subunit HslU (479 aa).

ATP is bound by residues I32, 74–79 (GVGKTE), D290, E355, and R427.

The protein belongs to the ClpX chaperone family. HslU subfamily. In terms of assembly, a double ring-shaped homohexamer of HslV is capped on each side by a ring-shaped HslU homohexamer. The assembly of the HslU/HslV complex is dependent on binding of ATP.

The protein localises to the cytoplasm. ATPase subunit of a proteasome-like degradation complex; this subunit has chaperone activity. The binding of ATP and its subsequent hydrolysis by HslU are essential for unfolding of protein substrates subsequently hydrolyzed by HslV. HslU recognizes the N-terminal part of its protein substrates and unfolds these before they are guided to HslV for hydrolysis. In Leptospira interrogans serogroup Icterohaemorrhagiae serovar Lai (strain 56601), this protein is ATP-dependent protease ATPase subunit HslU.